Consider the following 311-residue polypeptide: Olfactory receptor 287 (311 aa).

The Extracellular segment spans residues Met1–Arg27. Asn8 is a glycosylation site (N-linked (GlcNAc...) asparagine). Residues Ile28–Gly53 form a helical membrane-spanning segment. Residues Ala54 to Thr60 are Cytoplasmic-facing. A helical transmembrane segment spans residues Pro61 to Pro82. The Extracellular segment spans residues Lys83–Gln103. Cysteines 100 and 192 form a disulfide. Residues Met104–Tyr123 form a helical membrane-spanning segment. Residues Asp124 to Gly142 lie on the Cytoplasmic side of the membrane. A helical membrane pass occupies residues Leu143–Val161. Topologically, residues Pro162–Glu199 are extracellular. The chain crosses the membrane as a helical span at residues Leu200–Ala222. The Cytoplasmic portion of the chain corresponds to Tyr223 to Arg239. Residues Ala240 to Val263 traverse the membrane as a helical segment. The Extracellular segment spans residues Arg264–Lys275. A helical membrane pass occupies residues Ala276–Leu295. Over Arg296–Lys311 the chain is Cytoplasmic.

It belongs to the G-protein coupled receptor 1 family. As to expression, olfactory epithelium.

The protein localises to the cell membrane. Functionally, odorant receptor. This chain is Olfactory receptor 287 (Olr287), found in Rattus norvegicus (Rat).